The primary structure comprises 179 residues: Large ribosomal subunit protein uL5 (179 aa).

It belongs to the universal ribosomal protein uL5 family. Part of the 50S ribosomal subunit; part of the 5S rRNA/L5/L18/L25 subcomplex. Contacts the 5S rRNA and the P site tRNA. Forms a bridge to the 30S subunit in the 70S ribosome.

In terms of biological role, this is one of the proteins that bind and probably mediate the attachment of the 5S RNA into the large ribosomal subunit, where it forms part of the central protuberance. In the 70S ribosome it contacts protein S13 of the 30S subunit (bridge B1b), connecting the 2 subunits; this bridge is implicated in subunit movement. Contacts the P site tRNA; the 5S rRNA and some of its associated proteins might help stabilize positioning of ribosome-bound tRNAs. The protein is Large ribosomal subunit protein uL5 of Natranaerobius thermophilus (strain ATCC BAA-1301 / DSM 18059 / JW/NM-WN-LF).